The chain runs to 121 residues: Small ribosomal subunit protein uS13 (121 aa).

Positions 94–121 are disordered; sequence GLPLRGQRTRTNARTRKGPRRAAQSLKK.

This sequence belongs to the universal ribosomal protein uS13 family. Part of the 30S ribosomal subunit. Forms a loose heterodimer with protein S19. Forms two bridges to the 50S subunit in the 70S ribosome.

In terms of biological role, located at the top of the head of the 30S subunit, it contacts several helices of the 16S rRNA. In the 70S ribosome it contacts the 23S rRNA (bridge B1a) and protein L5 of the 50S subunit (bridge B1b), connecting the 2 subunits; these bridges are implicated in subunit movement. Contacts the tRNAs in the A and P-sites. The protein is Small ribosomal subunit protein uS13 of Paraburkholderia phymatum (strain DSM 17167 / CIP 108236 / LMG 21445 / STM815) (Burkholderia phymatum).